Reading from the N-terminus, the 85-residue chain is Cloacin immunity protein (85 aa).

N6-methyllysine is present on Lys12.

Belongs to the cloacin immunity protein family.

Functionally, this protein complexes with cloacin protein in equimolar amounts and inhibits it by binding with high affinity to the C-terminal catalytic domain of cloacin. This is Cloacin immunity protein (cim) from Escherichia coli.